We begin with the raw amino-acid sequence, 267 residues long: uncharacterized protein (267 aa).

Phosphoserine occurs at positions 210 and 224.

Testis. Down-regulated in men with spermatocyte arrest.

In terms of biological role, essential for normal spermatogenesis and male fertility. This is an uncharacterized protein from Homo sapiens (Human).